The sequence spans 134 residues: Replication enhancer protein (134 aa).

Belongs to the geminiviridae replication enhancer protein family. Homooligomer. Interacts with the replication-associated protein (REP). Interacts with host proliferating cell nuclear antigen (PCNA). Interacts with host retinoblastoma-related protein 1 (RBR1), and may thereby deregulate the host cell cycle. Oligomerization and interaction with PCNA are necessary for optimal replication enhancement.

In terms of biological role, increases viral DNA accumulation. Enhances infectivity and symptom expression. The sequence is that of Replication enhancer protein from Manihot esculenta (Cassava).